A 201-amino-acid chain; its full sequence is Chromophore lyase CpcT/CpeT (201 aa).

The protein belongs to the CpcT/CpeT biliprotein lyase family.

It localises to the plastid. It is found in the organellar chromatophore. In terms of biological role, covalently attaches a chromophore to Cys residue(s) of phycobiliproteins. The protein is Chromophore lyase CpcT/CpeT of Paulinella chromatophora.